We begin with the raw amino-acid sequence, 234 residues long: t-SNARE protein aex-4 (234 aa).

T-SNARE coiled-coil homology domains are found at residues 37–99 (AKLN…ITAM) and 170–232 (DAIE…VKKL).

This sequence belongs to the SNAP-25 family. Expressed in intestinal cells.

The protein resides in the cell membrane. Its function is as follows. t-SNARE protein which regulates the secretion of aex-5 from intestinal cells. Involved in the defecation motor program, which is a coordinated series of three muscle contractions that occurs every 45 seconds. This Caenorhabditis elegans protein is t-SNARE protein aex-4.